The sequence spans 293 residues: Urease accessory protein UreD 2 (293 aa).

It belongs to the UreD family. UreD, UreF and UreG form a complex that acts as a GTP-hydrolysis-dependent molecular chaperone, activating the urease apoprotein by helping to assemble the nickel containing metallocenter of UreC. The UreE protein probably delivers the nickel.

It localises to the cytoplasm. Its function is as follows. Required for maturation of urease via the functional incorporation of the urease nickel metallocenter. In Streptomyces griseus subsp. griseus (strain JCM 4626 / CBS 651.72 / NBRC 13350 / KCC S-0626 / ISP 5235), this protein is Urease accessory protein UreD 2.